The following is a 160-amino-acid chain: SsrA-binding protein (160 aa).

Positions 136–160 (KRDTMRERDSNRELQRAVRNKGKED) are disordered.

It belongs to the SmpB family.

It localises to the cytoplasm. Required for rescue of stalled ribosomes mediated by trans-translation. Binds to transfer-messenger RNA (tmRNA), required for stable association of tmRNA with ribosomes. tmRNA and SmpB together mimic tRNA shape, replacing the anticodon stem-loop with SmpB. tmRNA is encoded by the ssrA gene; the 2 termini fold to resemble tRNA(Ala) and it encodes a 'tag peptide', a short internal open reading frame. During trans-translation Ala-aminoacylated tmRNA acts like a tRNA, entering the A-site of stalled ribosomes, displacing the stalled mRNA. The ribosome then switches to translate the ORF on the tmRNA; the nascent peptide is terminated with the 'tag peptide' encoded by the tmRNA and targeted for degradation. The ribosome is freed to recommence translation, which seems to be the essential function of trans-translation. This chain is SsrA-binding protein, found in Pseudomonas putida (strain GB-1).